The primary structure comprises 264 residues: MSTLQEEIFNSIKEMKSKSPLVHNITNFVVMQITANALLAVGASPVMTFEKEEFEDMLSIASSLVVNIGTLTKTSIEAMHKACETANKKNVPFVLDPVGAGATKLRTKTAIDLIKNYNPKVVRGNASEIMVLAGESIKTKGVDSTANVNMALEAGKHLAKEYNTVVSISGETDIITDGNKVLYVSGGSPLMPVNTGMGCTSTAITGAMLAVSNPLIAAASAMCIMASAGEKASKKSEGPASFAVAFIDELYKLDINDAANRVKE.

Met-47 provides a ligand contact to substrate. Arg-123 and Ser-169 together coordinate ATP. A substrate-binding site is contributed by Gly-196.

The protein belongs to the Thz kinase family. Requires Mg(2+) as cofactor.

It catalyses the reaction 5-(2-hydroxyethyl)-4-methylthiazole + ATP = 4-methyl-5-(2-phosphooxyethyl)-thiazole + ADP + H(+). Its pathway is cofactor biosynthesis; thiamine diphosphate biosynthesis; 4-methyl-5-(2-phosphoethyl)-thiazole from 5-(2-hydroxyethyl)-4-methylthiazole: step 1/1. Its function is as follows. Catalyzes the phosphorylation of the hydroxyl group of 4-methyl-5-beta-hydroxyethylthiazole (THZ). In Brachyspira hyodysenteriae (strain ATCC 49526 / WA1), this protein is Hydroxyethylthiazole kinase.